A 254-amino-acid chain; its full sequence is MSPNIRPFIAGNWKMNGTGESLGELRAIAAGISSDLGRLFEALICVPATLLSRAFDILGGENILLGGQNCHFDDYGPYTGDISAFMLKEAGASHVIIGHSERRTVYQESDAIVRAKVQAAWRAGLVALICVGETLEERKSNKVLDVLTRQLEGSLPDGATAENIIIAYEPVWAVGTGNTATSADVAEVHAFIHHKMHSRFGDEGAKIRLLYGGSVKPSNAFELLSTAHVNGALIGGASLKAIDFLTICDVYRKL.

12–14 (NWK) serves as a coordination point for substrate. Histidine 99 functions as the Electrophile in the catalytic mechanism. The Proton acceptor role is filled by glutamate 169. Substrate is bound by residues glycine 175, serine 214, and 235–236 (GG).

The protein belongs to the triosephosphate isomerase family. As to quaternary structure, homodimer.

Its subcellular location is the cytoplasm. It carries out the reaction D-glyceraldehyde 3-phosphate = dihydroxyacetone phosphate. Its pathway is carbohydrate biosynthesis; gluconeogenesis. The protein operates within carbohydrate degradation; glycolysis; D-glyceraldehyde 3-phosphate from glycerone phosphate: step 1/1. Functionally, involved in the gluconeogenesis. Catalyzes stereospecifically the conversion of dihydroxyacetone phosphate (DHAP) to D-glyceraldehyde-3-phosphate (G3P). The sequence is that of Triosephosphate isomerase from Bartonella henselae (strain ATCC 49882 / DSM 28221 / CCUG 30454 / Houston 1) (Rochalimaea henselae).